Here is a 244-residue protein sequence, read N- to C-terminus: Probable histone-lysine N-methyltransferase set-23 (244 aa).

Positions 25-86 (EGCNCEAECS…SCRNRVVQCG (62 aa)) constitute a Pre-SET domain. Zn(2+)-binding residues include cysteine 27, cysteine 29, cysteine 33, cysteine 39, cysteine 41, cysteine 65, cysteine 69, cysteine 71, and cysteine 78. The region spanning 89 to 213 (KKLEIFSTCE…RGEELCYDYG (125 aa)) is the SET domain. Residues 101-103 (KGF), aspartate 141, tyrosine 143, arginine 170, and 173-174 (NH) each bind S-adenosyl-L-methionine. Zn(2+) is bound by residues cysteine 176, cysteine 225, cysteine 227, and cysteine 232. The Post-SET domain maps to 221–237 (NRKLCLCKSEKCRKYLP).

Belongs to the class V-like SAM-binding methyltransferase superfamily. Histone-lysine methyltransferase family. Suvar3-9 subfamily.

The protein resides in the nucleus. It localises to the chromosome. The catalysed reaction is L-lysyl-[histone] + S-adenosyl-L-methionine = N(6)-methyl-L-lysyl-[histone] + S-adenosyl-L-homocysteine + H(+). Probable histone methyltransferase. Required for embryonic development. This Caenorhabditis elegans protein is Probable histone-lysine N-methyltransferase set-23 (set-23).